Here is a 174-residue protein sequence, read N- to C-terminus: Transcription factor bHLH168 (174 aa).

Positions 14 to 63 (SLREQRNLREKERRMRMKHLFSILSSHVSPTRRLPVPQLIDQAVSYMIQL) constitute a bHLH domain.

This sequence belongs to the bHLH protein family.

It localises to the nucleus. In Arabidopsis thaliana (Mouse-ear cress), this protein is Transcription factor bHLH168.